The primary structure comprises 614 residues: FAD-dependent monooxygenase terD (614 aa).

Residues 1 to 23 (MSSKFDVVICGSGTAGLAAATWL) form the signal peptide. FAD-binding positions include 6–35 (DVVI…ILES), Gln-44, Val-137, and 239–241 (RVY). Residue Asn-260 is glycosylated (N-linked (GlcNAc...) asparagine). Tyr-282 and Asp-303 together coordinate FAD. Asn-317 carries N-linked (GlcNAc...) asparagine glycosylation. Ser-319 provides a ligand contact to FAD. The N-linked (GlcNAc...) asparagine glycan is linked to Asn-602.

It belongs to the PheA/TfdB FAD monooxygenase family. FAD is required as a cofactor.

It functions in the pathway secondary metabolite biosynthesis. Its function is as follows. FAD-dependent monooxygenase; part of the gene cluster that mediates the biosynthesis of terrein, a fungal metabolite with ecological, antimicrobial, antiproliferative, and antioxidative activities. The first step in the pathway is performed by the polyketide synthase terA that produces 4-hydroxy-6-methylpyranon (4-HMP), orsellinic acid (OA), and 2,3-dehydro-6-hydroxymellein (2,3-dehydro-6-HM) by condensing acetyl-CoA with two, three, or four malonyl-CoA units, respectively. 4-HMP and OA are not pathway intermediates, but are rather shunt or side products. 2,3-dehydro-6-HM is further converted to 6-hydroxymellein (6-HM) by the 6-hydroxymellein synthase terB. The monooxygenases terC and terD, the multicopper oxidase terE and the Kelch-like protein terF are then involved in the transformation of 6-HM to terrein. Even if they are co-regulated with the other terrein cluster genes, terH and terI seem to be dispensable for terrein production; whereas one or both of the 2 transporters terG and terJ are probably required for efficient secretion of metabolites. The protein is FAD-dependent monooxygenase terD of Aspergillus terreus (strain NIH 2624 / FGSC A1156).